Here is a 2376-residue protein sequence, read N- to C-terminus: Serine/threonine-protein kinase WNK1 (2376 aa).

Disordered regions lie at residues 1–78 (MSGG…EHRF) and 93–201 (ELPG…QQDD). Low complexity-rich tracts occupy residues 10 to 19 (SSPPGSLFLS) and 40 to 49 (GAAAADAGAG). Residues Ser-15 and Ser-19 each carry the phosphoserine modification. Basic and acidic residues predominate over residues 50–66 (RTEEYRRRRHTMDKDSR). At Thr-60 the chain carries Phosphothreonine. Low complexity predominate over residues 125–158 (TPAVAHVAQQPPAAATPGEPAAAVPAAASAPGSA). At Ser-172 the chain carries Phosphoserine. Residues 219–477 (LKFDIEIGRG…IKDLLNHAFF (259 aa)) form the Protein kinase domain. Ser-229 provides a ligand contact to ATP. 2 residues coordinate chloride: Phe-281 and Leu-297. ATP contacts are provided by residues 299–302 (TELM) and Lys-349. The active-site Proton acceptor is Asp-366. Chloride is bound by residues Leu-367 and Leu-369. Residues Ser-376 and Ser-380 each carry the phosphoserine; by autocatalysis modification. The segment at 486–553 (ELAEEDDGEK…VCEGDHKTMA (68 aa)) is autoinhibitory domain. Positions 571–586 (QLVREEQEKRKQEESS) are enriched in basic and acidic residues. Disordered stretches follow at residues 571–641 (QLVR…QLQY), 701–799 (AQPH…PVPT), and 1026–1118 (TTSS…SRPK). 2 stretches are compositionally biased toward low complexity: residues 587–601 (LKQQ…SQAG) and 614–624 (AAATTSASVST). Positions 627–637 (EPEEPEADQHQ) are interaction with KLHL3. Low complexity predominate over residues 708–752 (PPSSMAQGQSQGQPSSSSLTGIPSSQPVQHSQQQQGVQQTAPSQQ). Polar residues predominate over residues 753–766 (TVQYSLPQTSAPSE). Over residues 1045 to 1057 (PPEPVPAAPPQPT) the composition is skewed to pro residues. Residues 1079 to 1089 (SDGNENVPSSS) show a composition bias toward polar residues. A compositionally biased stretch (basic residues) spans 1097–1118 (IKRHYRKSVRSRSRHEKTSRPK). The short motif at 1257–1260 (RFIV) is the RFXV motif 1 element. Ser-1261 is modified (phosphoserine). Disordered stretches follow at residues 1459–1478 (STAA…VSGS) and 1734–1770 (STIP…PPSE). The segment covering 1746–1756 (SKPPSTKPPVL) has biased composition (pro residues). The short motif at 1853 to 1856 (RFQV) is the RFXV motif 2 element. Over residues 1862–1878 (DTQKEGKNKSEDVKSVH) the composition is skewed to basic and acidic residues. The tract at residues 1862–1942 (DTQKEGKNKS…QPTKVGRFQV (81 aa)) is disordered. Low complexity predominate over residues 1881 to 1899 (SSTSESSVLSSSSPESTLV). 2 short sequence motifs (RFXV motif) span residues 1939–1942 (RFQV) and 1951–1954 (RFSV). 7 positions are modified to phosphoserine: Ser-1972, Ser-1996, Ser-2005, Ser-2006, Ser-2021, Ser-2023, and Ser-2026. Disordered regions lie at residues 1991–2033 (EKPE…LCSK) and 2110–2239 (AAAP…RKGT). Over residues 2116–2128 (GRRRRPTKSKGSK) the composition is skewed to basic residues. The segment covering 2129–2141 (SSRSSSLGNKSPG) has biased composition (low complexity). Composition is skewed to polar residues over residues 2146-2161 (LSGQ…QQTL) and 2169-2193 (ETGQ…SAFT). A compositionally biased stretch (low complexity) spans 2207 to 2223 (GQGTSSTNTVGGTVSSQ). Positions 2224 to 2238 (AAQAQPPTMTSSRKG) are enriched in polar residues. The tract at residues 2235–2255 (SRKGTFTDDLHKLVDNWARDA) is amphipathic alpha-helix. Residues Ser-2264, Ser-2280, Ser-2364, and Ser-2366 each carry the phosphoserine modification.

Belongs to the protein kinase superfamily. Ser/Thr protein kinase family. WNK subfamily. Interacts with WNK3. Interacts with WNK4; inhibiting the activity of WNK4. Interacts with SGK1; promoting its activation. Associates with the mTORC2 complex. Interacts with UVRAG. Interacts (via amphipathic alpha-helix region) with EMC2; promoting the ER membrane protein complex assembly. Requires Mg(2+) as cofactor. Post-translationally, autophosphorylated at Ser-376 and Ser-380, promoting its activity. Autophosphorylation at Ser-380 is inhibited by intracellular calcium. Phosphorylation at Thr-60 increases ability to activate SGK1. In terms of processing, ubiquitinated by the BCR(KLHL3) complex, leading to its degradation. Also ubiquitinated by the BCR(KLHL2) complex.

The protein localises to the cytoplasm. It is found in the nucleus. The protein resides in the cytoskeleton. Its subcellular location is the spindle. It carries out the reaction L-seryl-[protein] + ATP = O-phospho-L-seryl-[protein] + ADP + H(+). The catalysed reaction is L-threonyl-[protein] + ATP = O-phospho-L-threonyl-[protein] + ADP + H(+). Activated in response to hyperosmotic stress: cell shrinkage promotes formation of a membraneless compartment that concentrates WNK1 with its substrates, OXSR1/OSR1 and STK39/SPAK. Activation requires autophosphorylation of Ser-380 and, to a lower extent, Ser-376. Autophosphorylation and subsequent activation is inhibited by increases in intracellular ionic strength: Cl(-) potently inhibits WNK1 kinase activity via direct binding. Also inhibited by K(+) ions. Functionally, serine/threonine-protein kinase component of the WNK1-SPAK/OSR1 kinase cascade, which acts as a key regulator of blood pressure and regulatory volume increase by promoting ion influx. WNK1 mediates regulatory volume increase in response to hyperosmotic stress by acting as a molecular crowding sensor, which senses cell shrinkage and mediates formation of a membraneless compartment by undergoing liquid-liquid phase separation. The membraneless compartment concentrates WNK1 with its substrates, OXSR1/OSR1 and STK39/SPAK, promoting WNK1-dependent phosphorylation and activation of downstream kinases OXSR1/OSR1 and STK39/SPAK. Following activation, OXSR1/OSR1 and STK39/SPAK catalyze phosphorylation of ion cotransporters SLC12A1/NKCC2, SLC12A2/NKCC1, SLC12A5/KCC2 and SLC12A6/KCC3, regulating their activity. Phosphorylation of Na-K-Cl cotransporters SLC12A2/NKCC1 and SLC12A2/NKCC1 promote their activation and ion influx; simultaneously, phosphorylation of K-Cl cotransporters SLC12A5/KCC2 and SLC12A6/KCC3 inhibit their activity, blocking ion efflux. Also acts as a regulator of angiogenesis in endothelial cells via activation of OXSR1/OSR1 and STK39/SPAK: activation of OXSR1/OSR1 regulates chemotaxis and invasion, while STK39/SPAK regulates endothelial cell proliferation. Also acts independently of the WNK1-SPAK/OSR1 kinase cascade by catalyzing phosphorylation of other substrates, such as SYT2, PCF11 and NEDD4L. Mediates phosphorylation of SYT2, regulating SYT2 association with phospholipids and membrane-binding. Regulates mRNA export in the nucleus by mediating phosphorylation of PCF11, thereby decreasing the association between PCF11 and POLR2A/RNA polymerase II and promoting mRNA export to the cytoplasm. Acts as a negative regulator of autophagy. Required for the abscission step during mitosis, independently of the WNK1-SPAK/OSR1 kinase cascade. May also play a role in actin cytoskeletal reorganization. Also acts as a scaffold protein independently of its protein kinase activity: negatively regulates cell membrane localization of various transporters and channels, such as SLC4A4, SLC26A6, SLC26A9, TRPV4 and CFTR. Involved in the regulation of epithelial Na(+) channel (ENaC) by promoting activation of SGK1 in a kinase-independent manner: probably acts as a scaffold protein that promotes the recruitment of SGK1 to the mTORC2 complex in response to chloride, leading to mTORC2-dependent phosphorylation and activation of SGK1. Acts as an assembly factor for the ER membrane protein complex independently of its protein kinase activity: associates with EMC2 in the cytoplasm via its amphipathic alpha-helix, and prevents EMC2 ubiquitination and subsequent degradation, thereby promoting EMC2 stabilization. The protein is Serine/threonine-protein kinase WNK1 of Sus scrofa (Pig).